The sequence spans 479 residues: Proline--tRNA ligase 2 (479 aa).

This sequence belongs to the class-II aminoacyl-tRNA synthetase family. ProS type 3 subfamily. In terms of assembly, homodimer.

It is found in the cytoplasm. It catalyses the reaction tRNA(Pro) + L-proline + ATP = L-prolyl-tRNA(Pro) + AMP + diphosphate. Its function is as follows. Catalyzes the attachment of proline to tRNA(Pro) in a two-step reaction: proline is first activated by ATP to form Pro-AMP and then transferred to the acceptor end of tRNA(Pro). This chain is Proline--tRNA ligase 2, found in Rhodococcus jostii (strain RHA1).